The sequence spans 210 residues: 7-carboxy-7-deazaguanine synthase (210 aa).

Substrate contacts are provided by residues 12–14 (LQG) and R27. The 193-residue stretch at 18 to 210 (NAGRPAVFCR…MQTHKYLNIP (193 aa)) folds into the Radical SAM core domain. Residues C31, C46, and C49 each coordinate [4Fe-4S] cluster. 48–50 (FCD) serves as a coordination point for S-adenosyl-L-methionine. T51 provides a ligand contact to Mg(2+). Position 90 (T90) interacts with substrate. S-adenosyl-L-methionine contacts are provided by residues G92, 133-135 (SPK), and 173-176 (QPMD). Substrate is bound at residue P210.

Belongs to the radical SAM superfamily. 7-carboxy-7-deazaguanine synthase family. As to quaternary structure, homodimer. [4Fe-4S] cluster is required as a cofactor. Requires S-adenosyl-L-methionine as cofactor. The cofactor is Mg(2+).

The enzyme catalyses 6-carboxy-5,6,7,8-tetrahydropterin + H(+) = 7-carboxy-7-deazaguanine + NH4(+). The protein operates within purine metabolism; 7-cyano-7-deazaguanine biosynthesis. Catalyzes the complex heterocyclic radical-mediated conversion of 6-carboxy-5,6,7,8-tetrahydropterin (CPH4) to 7-carboxy-7-deazaguanine (CDG), a step common to the biosynthetic pathways of all 7-deazapurine-containing compounds. The sequence is that of 7-carboxy-7-deazaguanine synthase from Burkholderia multivorans (strain ATCC 17616 / 249).